Reading from the N-terminus, the 999-residue chain is Probable metabotropic glutamate receptor mgl-1 (999 aa).

Residues Ser-202, 223 to 225 (AST), Tyr-273, Glu-363, and Lys-455 each bind L-glutamate. The N-linked (GlcNAc...) asparagine glycan is linked to Asn-518. Helical transmembrane passes span 682–704 (SLVPTILAVFGIIATLFVIVVYV), 719–739 (LSYILLISMIMCYCMTFVLLS), 751–769 (TGIGFAFSCLYSAMFVKTN), 792–812 (VVMTAMLAGVQLIGSLIWLSV), 836–857 (HHFLYSLAYDGFLIVLCTTYAV), 871–893 (FIGFSMYTTCVVWLSWIFFFFGT), and 904–929 (LCISISMSANVALACIFSPKLWIILF). A disordered region spans residues 975-999 (DSTRRRSSRKTSQPTSTSSAHDTFL). Residues 984 to 993 (KTSQPTSTSS) are compositionally biased toward low complexity.

The protein belongs to the G-protein coupled receptor 3 family.

It localises to the cell membrane. In terms of biological role, G-protein coupled receptor for glutamate. Ligand binding causes a conformation change that triggers signaling via guanine nucleotide-binding proteins (G proteins) and modulates the activity of down-stream effectors. The protein is Probable metabotropic glutamate receptor mgl-1 (mgl-1) of Caenorhabditis elegans.